The primary structure comprises 907 residues: Sensor protein GacS (907 aa).

3 helical membrane passes run 9–25 (ASLM…WMQL), 84–101 (VLAH…IGSG), and 159–178 (LFAS…TLAV). The HAMP domain occupies 182–234 (RTINGPMSQIKQAVSQLKDGNLETRLPPLGSRELDELASGINRMAATLQNAQE). One can recognise a Histidine kinase domain in the interval 281-502 (NMSHEIRTPL…EFWISLKLPK (222 aa)). Position 284 is a phosphohistidine; by autocatalysis (His284). One can recognise a Response regulatory domain in the interval 658–777 (RVLCVDDNPA…QLAQVVLKWT (120 aa)). Asp707 bears the 4-aspartylphosphate mark. The HPt domain maps to 814–907 (KADLAADMLA…RLEAEARVMA (94 aa)). Residue His853 is modified to Phosphohistidine.

In terms of processing, activation requires a sequential transfer of a phosphate group from a His in the primary transmitter domain, to an Asp in the receiver domain and to a His in the secondary transmitter domain.

Its subcellular location is the cell inner membrane. The enzyme catalyses ATP + protein L-histidine = ADP + protein N-phospho-L-histidine.. Its function is as follows. Forms part of a two-component regulatory system GacA/GacS(LemA). May be involved in lesion formation, swarming and in the production of extracellular protease, syringomycin and N-acyl-L-homoserine lactone (acyl-HSL). Required for pathogenicity on bean. The chain is Sensor protein GacS (gacS) from Pseudomonas syringae pv. syringae.